The chain runs to 261 residues: Small ribosomal subunit protein uS2 (261 aa).

The tract at residues 223–261 (EGKQGQDDSEDVEKEMADKAAAEDDEEESIEVVVEKSED) is disordered.

It belongs to the universal ribosomal protein uS2 family.

The protein is Small ribosomal subunit protein uS2 of Lactobacillus johnsonii (strain CNCM I-12250 / La1 / NCC 533).